Here is a 50-residue protein sequence, read N- to C-terminus: U-megalopygitoxin(9)-Mo13 (50 aa).

A signal peptide spans 1 to 23 (MKLVFLFFIVAVMVSLFVGMTEA). An intrachain disulfide couples Cys33 to Cys40.

The protein belongs to the caterpillar 9 family. As to expression, expressed by the venom apparatus.

The protein localises to the secreted. In terms of biological role, probable toxin. This Megalopyge opercularis (Southern flannel moth) protein is U-megalopygitoxin(9)-Mo13.